Consider the following 539-residue polypeptide: Nucleobase-ascorbate transporter 8 (539 aa).

The interval 1 to 20 (MAGDGVENAKPPQKQEDLQP) is disordered. 12 helical membrane passes run 44 to 64 (ILLG…IPTM), 79 to 99 (LIQT…FFGT), 101 to 121 (LPAV…IVLA), 141 to 161 (IQGA…SGLW), 167 to 187 (FLSP…LYEQ), 189 to 209 (FPML…LVIF), 229 to 249 (FAVI…TIGG), 295 to 315 (IFAM…TYIA), 368 to 388 (VGSR…SILG), 399 to 421 (APIV…LSLI), 433 to 453 (FILG…YQYT), and 470 to 490 (NIIN…AFFL).

This sequence belongs to the nucleobase:cation symporter-2 (NCS2) (TC 2.A.40) family. In terms of tissue distribution, highly expressed in ovules, endosperm and embryo.

It localises to the cell membrane. In Arabidopsis thaliana (Mouse-ear cress), this protein is Nucleobase-ascorbate transporter 8 (NAT8).